The following is a 348-amino-acid chain: Selenide, water dikinase (348 aa).

Cys17 is an active-site residue. ATP contacts are provided by residues Lys20 and Thr47–Asp49. Position 50 (Asp50) interacts with Mg(2+). ATP-binding positions include Asp67, Asp90, and Gly138–Thr140. Asp90 is a binding site for Mg(2+). Asp226 lines the Mg(2+) pocket.

Belongs to the selenophosphate synthase 1 family. Class I subfamily. In terms of assembly, homodimer. Requires Mg(2+) as cofactor.

The enzyme catalyses hydrogenselenide + ATP + H2O = selenophosphate + AMP + phosphate + 2 H(+). Functionally, synthesizes selenophosphate from selenide and ATP. The chain is Selenide, water dikinase from Porphyromonas gingivalis (strain ATCC BAA-308 / W83).